Consider the following 601-residue polypeptide: Probable N-acetylgalactosaminyltransferase 7 (601 aa).

Residues 1–20 (MIIARKKLQLQRLWRQRGCR) lie on the Cytoplasmic side of the membrane. A helical; Signal-anchor for type II membrane protein transmembrane segment spans residues 21–38 (VATYICLGVLVLFGFVYN). At 39–601 (SKGNSMSSIK…FVWKEFYQSS (563 aa)) the chain is on the lumenal side. Positions 61–108 (DLTNKELPGGPDPNTIFRGSELGNYEPKEPEIPSNQPGEHGKPVPVTD) are disordered. N-linked (GlcNAc...) asparagine glycosylation is present at Asn-135. 5 disulfides stabilise this stretch: Cys-146–Cys-382, Cys-373–Cys-452, Cys-490–Cys-506, Cys-529–Cys-542, and Cys-568–Cys-583. The segment at 155-265 (LPTVSVVVVF…TNWLPPLLAP (111 aa)) is catalytic subdomain A. Substrate contacts are provided by Asp-196 and Arg-226. 2 residues coordinate Mn(2+): Asp-249 and His-251. Positions 328–390 (PFRSPTHAGG…PCSHVGHVYR (63 aa)) are catalytic subdomain B. Residue Trp-359 participates in substrate binding. Mn(2+) is bound at residue His-387. Positions 390 and 395 each coordinate substrate. A Ricin B-type lectin domain is found at 477–595 (DVWGEARNPA…DNERQKFVWK (119 aa)).

This sequence belongs to the glycosyltransferase 2 family. GalNAc-T subfamily. Requires Mn(2+) as cofactor.

The protein resides in the golgi apparatus membrane. Its pathway is protein modification; protein glycosylation. Its function is as follows. Probable glycopeptide transferase involved in O-linked oligosaccharide biosynthesis. Glycopeptide transferases catalyze the transfer of an N-acetyl-D-galactosamine residue to an already glycosylated peptide. In contrast to other members of the family, it does not act as a peptide transferase that transfers GalNAc onto serine or threonine residue on peptides that have been tested. Some peptide transferase activity is however not excluded, considering that its appropriate peptide substrate may remain unidentified. In Caenorhabditis elegans, this protein is Probable N-acetylgalactosaminyltransferase 7 (gly-7).